A 93-amino-acid polypeptide reads, in one-letter code: LSM complex subunit LSM5 (93 aa).

Positions 7–87 (LPLEVIDKTI…IAILVPGGKK (81 aa)) constitute a Sm domain.

This sequence belongs to the snRNP Sm proteins family. As to quaternary structure, component of the heptameric LSM1-LSM7 complex that forms a seven-membered ring structure with a donut shape. The LSm subunits are arranged in the order LSM1, LSM2, LSM3, LSM6, LSM5, LSM7 and LSM4. Except for LSM1, where a C-terminal helix crosses the ring structure to form additional interactions with LSM3 and LSM6, each subunit interacts only with its two neighboring subunits. The LSM1-LSM7 complex interacts with PAT1; within the complex PAT1 has direct interactions with LSM2 and LSM3. The LSM1-LSM7 complex interacts with XRN1. Component of the heptameric LSM2-LSM8 complex that forms a seven-membered ring structure with a donut shape; an RNA strand can pass through the hole in the center of the ring structure. The LSm subunits are arranged in the order LSM8, LSM2, LSM3, LSM6, LSM5, LSM7 and LSM4. Component of the spliceosome U4/U6-U5 tri-snRNP complex composed of the U4, U6 and U5 snRNAs and at least PRP3, PRP4, PRP6, PRP8, PRP18, PRP31, PRP38, SNU13, SNU23, SNU66, SNU114, SPP381, SMB1, SMD1, SMD2, SMD3, SMX2, SMX3, LSM2, LSM3, LSM4, LSM5, LSM6, LSM7, LSM8, BRR2 and DIB1. May be found in a complex comprising LSM2-LSM7 without LSM1 or LSM8; the complex associates with pre-P RNA and snoRNA SNR5.

Its subcellular location is the nucleus. The protein localises to the nucleolus. It is found in the cytoplasm. Its function is as follows. Component of LSm protein complexes, which are involved in RNA processing and may function in a chaperone-like manner. Component of the cytoplasmic LSM1-LSM7 complex which is involved in mRNA degradation by activating the decapping step. Together with PAT1, the LSM1-LSM7 complex binds to osmotic stress-activated mRNAs to attenuate the osmotic stress response, probably by limiting ribosome access to the mRNA and consequently translation. Component of the nuclear LSM2-LSM8 complex, which is involved in spliceosome assembly. The LSM2-LSM8 complex plays a role in the biogenesis of the spliceosomal U4/U6-U5 tri-snRNP complex by accelerating PRP24-mediated annealing of U4/U6 di-snRNA. The LSM2-LSM8 complex binds U6 snRNA terminating with a non-cyclic 3' phosphate group. LSM2-LSM8 is probably also involved in degradation of nuclear pre-mRNA by targeting them for decapping. LSM2-LSM8 could be involved in processing of pre-tRNAs, pre-rRNAs and U3 snoRNA, although involvement may be indirect. In a complex that probably contains LSM2-LSM7, but not LSM1 or LSM8, associates with the precursor of the RNA component of RNase P (pre-P RNA) and may be involved in maturing pre-P RNA; the complex also associates with snoRNA SNR5. This is LSM complex subunit LSM5 (LSM5) from Saccharomyces cerevisiae (strain ATCC 204508 / S288c) (Baker's yeast).